The chain runs to 251 residues: ATP synthase subunit a 2 (251 aa).

5 helical membrane-spanning segments follow: residues glycine 35–alanine 55, leucine 94–isoleucine 114, isoleucine 133–serine 153, leucine 198–leucine 218, and glycine 219–histidine 239.

This sequence belongs to the ATPase A chain family. As to quaternary structure, F-type ATPases have 2 components, CF(1) - the catalytic core - and CF(0) - the membrane proton channel. CF(1) has five subunits: alpha(3), beta(3), gamma(1), delta(1), epsilon(1). CF(0) has four main subunits: a, b, b' and c.

The protein resides in the cellular thylakoid membrane. Its function is as follows. Key component of the proton channel; it plays a direct role in the translocation of protons across the membrane. In Crocosphaera subtropica (strain ATCC 51142 / BH68) (Cyanothece sp. (strain ATCC 51142)), this protein is ATP synthase subunit a 2.